The chain runs to 250 residues: Cell division protein ZapD (250 aa).

The protein belongs to the ZapD family. Interacts with FtsZ.

Its subcellular location is the cytoplasm. In terms of biological role, cell division factor that enhances FtsZ-ring assembly. Directly interacts with FtsZ and promotes bundling of FtsZ protofilaments, with a reduction in FtsZ GTPase activity. The chain is Cell division protein ZapD from Yersinia pseudotuberculosis serotype O:1b (strain IP 31758).